The primary structure comprises 173 residues: Lectin BRA-2 (173 aa).

N-linked (GlcNAc...) asparagine glycosylation is present at N39. Disulfide bonds link C47-C61, C78-C168, and C144-C160. The C-type lectin domain occupies 51–170; sequence PNGWVTSENK…NDRYNFVCEI (120 aa).

Homohexamer; disulfide-linked. Coelemic fluid.

In terms of biological role, sugar-binding protein which recognizes specific carbohydrate structures and agglutinates a variety of animal cells by binding to cell-surface glycoproteins and glycolipids. Calcium-dependent lectin. Invertebrate lectins may be involved in defense functions. The protein is Lectin BRA-2 of Megabalanus rosa (Acorn barnacle).